The primary structure comprises 269 residues: Replication protein A 32 kDa subunit (269 aa).

A compositionally biased stretch (polar residues) spans 1-22; sequence MSNRVQGGFDNNSGNNQSAQKQ. Positions 1 to 25 are disordered; it reads MSNRVQGGFDNNSGNNQSAQKQQAE. The segment at residues 69–149 is a DNA-binding region (OB); sequence ITAKFEFLQS…AQIQLLYFSI (81 aa).

The protein belongs to the replication factor A protein 2 family. Component of the replication protein A complex (RPA), a heterotrimeric complex composed of RPA1, RPA2/TEB2 and RPA3/TEB3. Component of the telomerase holoenzyme complex, composed of the catalytic core (the catalytic subunit TERT, the telomerase RNA template component TER and TAP65/p65), which is associated with two heterotrimeric subcomplexes: (i) the replication protein A (RPA)-related subcomplex, composed of TEB1, RPA2/TEB2 and RPA3/TEB3 and (ii) the CST-like subcomplex, composed of TAP75/p75, TAP45/p45 and TAP19/p19. TEB1 and the CST-like subcomplex are tethered to the catalytic core by TAP50/p50.

It is found in the nucleus. The protein localises to the chromosome. Its subcellular location is the telomere. Component of the heterotrimeric replication protein A (RPA) and holoenzyme telomerase ribonucleoprotein complexes. As part of the RPA complex, binds and stabilizes single-stranded DNA (ssDNA) intermediates, that form during DNA replication or upon DNA stress. It prevents their reannealing and in parallel, recruits and activates different proteins and complexes involved in DNA metabolism. Thereby, it plays an essential role both in DNA replication and the cellular response to DNA damage. In the cellular response to DNA damage, the RPA complex controls DNA repair and DNA damage checkpoint activation. Also part of a subcomplex of the holoenzyme telomerase ribonucleoprotein complex: this subcomplex that contains TEB1, RPA2/TEB2, RPA3/TEB3, but not RPA1, mediates the recruitment of telomerase to telomeric DNA via specific interaction between TEB1 and telomeric ssDNA. In the holoenzyme telomerase ribonucleoprotein complex, RPA2/TEB2 and RPA3/TEB3 act as assembly factors for TEB1 incorporation into telomerase holoenzyme. In the holoenzyme telomerase ribonucleoprotein complex, RPA2/TEB2 does not contribute to ssDNA affinity, while it contributes to ssDNA affinity in the RPA complex. The sequence is that of Replication protein A 32 kDa subunit (RPA2) from Tetrahymena thermophila (strain SB210).